Here is a 213-residue protein sequence, read N- to C-terminus: UPF0111 protein TM_0914 (213 aa).

This sequence belongs to the UPF0111 family.

In Thermotoga maritima (strain ATCC 43589 / DSM 3109 / JCM 10099 / NBRC 100826 / MSB8), this protein is UPF0111 protein TM_0914.